The primary structure comprises 501 residues: ATP synthase subunit alpha, chloroplastic (501 aa).

Position 170–177 (170–177 (GDRQTGKT)) interacts with ATP.

Belongs to the ATPase alpha/beta chains family. F-type ATPases have 2 components, CF(1) - the catalytic core - and CF(0) - the membrane proton channel. CF(1) has five subunits: alpha(3), beta(3), gamma(1), delta(1), epsilon(1). CF(0) has four main subunits: a, b, b' and c.

The protein localises to the plastid. The protein resides in the chloroplast thylakoid membrane. The catalysed reaction is ATP + H2O + 4 H(+)(in) = ADP + phosphate + 5 H(+)(out). Functionally, produces ATP from ADP in the presence of a proton gradient across the membrane. The alpha chain is a regulatory subunit. This is ATP synthase subunit alpha, chloroplastic from Pisum sativum (Garden pea).